Here is a 556-residue protein sequence, read N- to C-terminus: Secreted lipase 4 (556 aa).

The signal sequence occupies residues 1–21 (MKLLTNIGTLLALSPVQQVSA). Residues Asn46, Asn263, Asn305, Asn411, and Asn453 are each glycosylated (N-linked (GlcNAc...) asparagine).

Belongs to the type-B carboxylesterase/lipase family.

The protein localises to the secreted. It carries out the reaction a carboxylic ester + H2O = an alcohol + a carboxylate + H(+). Secreted lipase involved in plant virulence. Has a substrate preference for p-nitrophenyl esters with a carbon chain length of C12 (p-nitrophenyl laureate). This Gibberella zeae (strain ATCC MYA-4620 / CBS 123657 / FGSC 9075 / NRRL 31084 / PH-1) (Wheat head blight fungus) protein is Secreted lipase 4.